The primary structure comprises 124 residues: Glycine cleavage system H protein (124 aa).

Residues 19 to 101 (VATVGITDHA…ESGAWFFRMT (83 aa)) enclose the Lipoyl-binding domain. Residue Lys-60 is modified to N6-lipoyllysine.

The protein belongs to the GcvH family. In terms of assembly, the glycine cleavage system is composed of four proteins: P, T, L and H. The cofactor is (R)-lipoate.

Functionally, the glycine cleavage system catalyzes the degradation of glycine. The H protein shuttles the methylamine group of glycine from the P protein to the T protein. The polypeptide is Glycine cleavage system H protein (Acidiphilium cryptum (strain JF-5)).